The primary structure comprises 232 residues: Recombination protein RecR (232 aa).

Residues 92 to 107 (CQVCFHLSAEPVCDIC) form a C4-type zinc finger. The region spanning 115-209 (SVICVVSDPR…KVTRIAFGLP (95 aa)) is the Toprim domain.

Belongs to the RecR family.

Functionally, may play a role in DNA repair. It seems to be involved in an RecBC-independent recombinational process of DNA repair. It may act with RecF and RecO. This Synechocystis sp. (strain ATCC 27184 / PCC 6803 / Kazusa) protein is Recombination protein RecR.